A 277-amino-acid chain; its full sequence is Phosphoribosylaminoimidazole-succinocarboxamide synthase (277 aa).

Belongs to the SAICAR synthetase family.

The catalysed reaction is 5-amino-1-(5-phospho-D-ribosyl)imidazole-4-carboxylate + L-aspartate + ATP = (2S)-2-[5-amino-1-(5-phospho-beta-D-ribosyl)imidazole-4-carboxamido]succinate + ADP + phosphate + 2 H(+). It functions in the pathway purine metabolism; IMP biosynthesis via de novo pathway; 5-amino-1-(5-phospho-D-ribosyl)imidazole-4-carboxamide from 5-amino-1-(5-phospho-D-ribosyl)imidazole-4-carboxylate: step 1/2. This chain is Phosphoribosylaminoimidazole-succinocarboxamide synthase, found in Salinispora tropica (strain ATCC BAA-916 / DSM 44818 / JCM 13857 / NBRC 105044 / CNB-440).